Consider the following 303-residue polypeptide: Sulfate adenylyltransferase subunit 2 (303 aa).

It belongs to the PAPS reductase family. CysD subfamily. As to quaternary structure, heterodimer composed of CysD, the smaller subunit, and CysN.

The catalysed reaction is sulfate + ATP + H(+) = adenosine 5'-phosphosulfate + diphosphate. The protein operates within sulfur metabolism; hydrogen sulfide biosynthesis; sulfite from sulfate: step 1/3. Its function is as follows. With CysN forms the ATP sulfurylase (ATPS) that catalyzes the adenylation of sulfate producing adenosine 5'-phosphosulfate (APS) and diphosphate, the first enzymatic step in sulfur assimilation pathway. APS synthesis involves the formation of a high-energy phosphoric-sulfuric acid anhydride bond driven by GTP hydrolysis by CysN coupled to ATP hydrolysis by CysD. This chain is Sulfate adenylyltransferase subunit 2, found in Akkermansia muciniphila (strain ATCC BAA-835 / DSM 22959 / JCM 33894 / BCRC 81048 / CCUG 64013 / CIP 107961 / Muc).